We begin with the raw amino-acid sequence, 397 residues long: t-SNARE affecting a late Golgi compartment protein 2 (397 aa).

Over 1-317 (MFRDRTNLFL…HYQKRTQKCK (317 aa)) the chain is Cytoplasmic. Residues 74–96 (DIAQDVDDYLLEVRRLSEQLAKV) are a coiled coil. A Phosphoserine modification is found at S109. In terms of domain architecture, t-SNARE coiled-coil homology spans 244–306 (EAYLRERDEE…KSADKELNKA (63 aa)). Residues 318–338 (VILLLTLCVIALFFFVMLKPH) traverse the membrane as a helical; Anchor for type IV membrane protein segment. Over 339 to 397 (GGGSGGRNNGSNKYNNDDNKTVNNSHDDGSNTHINDEESNLPSIVEVTESENDALDDLL) the chain is Vesicular. A disordered region spans residues 341-397 (GSGGRNNGSNKYNNDDNKTVNNSHDDGSNTHINDEESNLPSIVEVTESENDALDDLL). A compositionally biased stretch (basic and acidic residues) spans 353–374 (NNDDNKTVNNSHDDGSNTHIND). The span at 386–397 (TESENDALDDLL) shows a compositional bias: acidic residues.

This sequence belongs to the syntaxin family. In terms of assembly, interacts with VPS45.

It localises to the golgi apparatus. The protein localises to the trans-Golgi network membrane. It is found in the endosome membrane. Functionally, t-SNARE that functions in transport from the endosome to the late Golgi and on the endocytic pathway. The sequence is that of t-SNARE affecting a late Golgi compartment protein 2 (TLG2) from Saccharomyces cerevisiae (strain ATCC 204508 / S288c) (Baker's yeast).